Here is a 142-residue protein sequence, read N- to C-terminus: Hemoglobin subunit alpha-A (142 aa).

The region spanning 2 to 142 is the Globin domain; that stretch reads VLSAADKTNV…VGAVLTAKYR (141 aa). His59 lines the O2 pocket. His88 is a heme b binding site.

It belongs to the globin family. Heterotetramer of two alpha chains and two beta chains. In terms of tissue distribution, red blood cells.

Its function is as follows. Involved in oxygen transport from the lung to the various peripheral tissues. The protein is Hemoglobin subunit alpha-A (HBAA) of Anas platyrhynchos (Mallard).